Reading from the N-terminus, the 178-residue chain is Major urinary protein 4 (178 aa).

The first 16 residues, 1–16 (MKLLLCLGLTLVCIHA), serve as a signal peptide directing secretion. Residues C80 and C173 are joined by a disulfide bond.

Belongs to the calycin superfamily. Lipocalin family. As to expression, expressed in lacrimal gland, parotid gland, sublingual gland, nasal mucus, and vomeronasal organ.

The protein resides in the secreted. In terms of biological role, binds pheromones, likely to displace pheromones complexed to urinary MUPs and transport them to the vomeronasal organ (VNO) where they associate with their neuronal receptor(s). MUP4 is highly specific for the male mouse pheromone 2-sec-butyl-4,5-dihydrothiazole (SBT). The protein is Major urinary protein 4 (Mup4) of Mus musculus (Mouse).